The sequence spans 484 residues: MSMAASSSTATVQPSGIITQPPPPSTLREQRIATHSHIKGLGLADDGTAMSSSQGFIGQILAREALGLHLSLLKGGKYSGRPLLLVGPPGTGKTALALALSQELGSKVPFCAMVGSEVYSGEVKKTEVLGSCFRRAIGLRIKETKEVYEGEVTELTPSEAENPLSGYGKTISHVIVGLKTVKGTKQLRLDPSVYESIQKERVVVGDVIYIEANTGAVKRVGRSDAYASEYDLEAEEYVPLPKGDVHKRKELVQDVTLHDLDMANARPQGGQDIMSVMGQLVKGGRTEVTDKLRREINKVVDRYIEQGVAELVPGVLFIDEVHMLDMECFTYLNRALESPMSPYVVLASNRGISTIRGTEYDGVAGSASEGIRAPHGLPVDLLDRCMIVKTQLYTRDEIRRIVEMRCKVEGIAISSEAVDKLADEGERSSLRYALQLLTPAGIVSKNKGKGEVGVADVEELGELFLDAKRSAGVLRSTEDFEKRY.

Residues 1 to 11 (MSMAASSSTAT) are compositionally biased toward low complexity. The interval 1–27 (MSMAASSSTATVQPSGIITQPPPPSTL) is disordered. Position 87-94 (87-94 (GPPGTGKT)) interacts with ATP.

Belongs to the RuvB family. In terms of assembly, may form heterododecamers with RVB2. Component of the SWR1 chromatin remodeling complex, the INO80 chromatin remodeling complex, and of the R2TP complex.

It localises to the nucleus. It carries out the reaction ATP + H2O = ADP + phosphate + H(+). DNA helicase which participates in several chromatin remodeling complexes, including the SWR1 and the INO80 complexes. The SWR1 complex mediates the ATP-dependent exchange of histone H2A for the H2A variant HZT1 leading to transcriptional regulation of selected genes by chromatin remodeling. The INO80 complex remodels chromatin by shifting nucleosomes and is involved in DNA repair. Also involved in pre-rRNA processing. The sequence is that of RuvB-like helicase 1 (RVB1) from Cryptococcus neoformans var. neoformans serotype D (strain B-3501A) (Filobasidiella neoformans).